Here is a 564-residue protein sequence, read N- to C-terminus: MAEARDLFKEFKVQSVSEFFRRNAAMLGYTGKIRSLTTIIHEAVTNSLDACEEAGILPYIRVEIEELGKEHYKVIVEDNGPGIPEEYIPHVFGKMLAGTKAHRNIQSRGQQGIGISGAVMFAQITSGKATRVITSTGGEIVEAWVKIDVQKNEGKIVKKLKHPNPKGWRGTRIELEVKDVKYVRSKQGVYWYLKLTAIANPHAHIELVEPDGKLVVFPRSSEDIPEPPVEMKPHPKGVMVDDVYTMAHRSKRSSVRRFLVSEFSRISDKKVDELIKYITALRLIKSETNKEVKEKLYEKLVSGDVDSVLRAFGRKWKKELEKVAKIMDKSPEKLTWHEAEEIVEAFKLMKFLAPPTHGLRPIGEENIKKGLTSILKPEFVTAVTRAPRVYAGGIPFQVEVGLAYGGQIQGSEILRYANRVPLLFDAGSCVITSAVRSIDWKRYKIDSFDSAPLVVLVNVVSVHVPYTSTGKQSIADIDEIHNEIRLALMDAARRLSFYLGGKFRRMYQVKRRKTLEKYLPEIARSLHILTGEPEEKIKEYFLKLIESKIEVEEVSEVEAEEAEA.

ATP is bound by residues asparagine 46, aspartate 78, threonine 99–lysine 100, glycine 109–serine 116, and lysine 471.

It belongs to the TOP6B family. Homodimer. Heterotetramer of two Top6A and two Top6B chains.

The catalysed reaction is ATP-dependent breakage, passage and rejoining of double-stranded DNA.. Its function is as follows. Relaxes both positive and negative superturns and exhibits a strong decatenase activity. This chain is Type 2 DNA topoisomerase 6 subunit B, found in Pyrococcus abyssi (strain GE5 / Orsay).